The chain runs to 365 residues: Succinate--CoA ligase [ADP-forming] subunit beta (365 aa).

In terms of domain architecture, ATP-grasp spans 9–230; sequence KEIFRAEGIS…EMEEYEPEEF (222 aa). ATP is bound by residues K45, 52–54, E90, I93, and E98; that span reads GRG. Positions 190 and 203 each coordinate Mg(2+). Substrate contacts are provided by residues N244 and 300–302; that span reads GIT.

This sequence belongs to the succinate/malate CoA ligase beta subunit family. As to quaternary structure, heterotetramer of two alpha and two beta subunits. Mg(2+) serves as cofactor.

It catalyses the reaction succinate + ATP + CoA = succinyl-CoA + ADP + phosphate. It carries out the reaction GTP + succinate + CoA = succinyl-CoA + GDP + phosphate. The protein operates within carbohydrate metabolism; tricarboxylic acid cycle; succinate from succinyl-CoA (ligase route): step 1/1. Functionally, succinyl-CoA synthetase functions in the citric acid cycle (TCA), coupling the hydrolysis of succinyl-CoA to the synthesis of either ATP or GTP and thus represents the only step of substrate-level phosphorylation in the TCA. The beta subunit provides nucleotide specificity of the enzyme and binds the substrate succinate, while the binding sites for coenzyme A and phosphate are found in the alpha subunit. The polypeptide is Succinate--CoA ligase [ADP-forming] subunit beta (Methanothermobacter thermautotrophicus (strain ATCC 29096 / DSM 1053 / JCM 10044 / NBRC 100330 / Delta H) (Methanobacterium thermoautotrophicum)).